We begin with the raw amino-acid sequence, 209 residues long: Large ribosomal subunit protein uL3 (209 aa).

Residues 118–151 (GFQGAIKRHGQSRGPMSHGSRYHRRPGSMGPVAP) are disordered.

This sequence belongs to the universal ribosomal protein uL3 family. In terms of assembly, part of the 50S ribosomal subunit. Forms a cluster with proteins L14 and L19.

Its function is as follows. One of the primary rRNA binding proteins, it binds directly near the 3'-end of the 23S rRNA, where it nucleates assembly of the 50S subunit. This chain is Large ribosomal subunit protein uL3, found in Enterococcus faecalis (strain ATCC 700802 / V583).